The sequence spans 148 residues: Lysozyme-like protein 6 (148 aa).

A signal peptide spans 1–19 (MTSPLLISLASCLVAVNQA). A C-type lysozyme domain is found at 20 to 148 (SLIGRCDLAK…SYWMTGCHLA (129 aa)). 4 disulfides stabilise this stretch: Cys25–Cys145, Cys49–Cys133, Cys83–Cys98, and Cys94–Cys112. Catalysis depends on residues Glu54 and Asp71.

This sequence belongs to the glycosyl hydrolase 22 family. In terms of assembly, monomer.

It localises to the secreted. It is found in the cell surface. Its subcellular location is the cell projection. The protein resides in the cilium. The protein localises to the flagellum. The enzyme catalyses Hydrolysis of (1-&gt;4)-beta-linkages between N-acetylmuramic acid and N-acetyl-D-glucosamine residues in a peptidoglycan and between N-acetyl-D-glucosamine residues in chitodextrins.. May be involved sperm-egg plasma membrane adhesion and fusion during fertilization. Exhibits bacteriolytic activity in vitro against Micrococcus luteus and Staphylococcus aureus. Shows weak bacteriolytic activity against Gram-positive bacteria at physiological pH. Bacteriolytic activity is pH-dependent, with a maximum at around pH 5.6. The chain is Lysozyme-like protein 6 (LYZL6) from Bos taurus (Bovine).